The primary structure comprises 277 residues: Phosphate import ATP-binding protein PstB (277 aa).

The ABC transporter domain maps to 31–272 (LEVPGLNLFY…PAKKQTEDYI (242 aa)). 63-70 (GPSGCGKS) is a binding site for ATP.

It belongs to the ABC transporter superfamily. Phosphate importer (TC 3.A.1.7) family. As to quaternary structure, the complex is composed of two ATP-binding proteins (PstB), two transmembrane proteins (PstC and PstA) (Potential). PstS is missing in this species.

The protein localises to the cell inner membrane. It catalyses the reaction phosphate(out) + ATP + H2O = ADP + 2 phosphate(in) + H(+). Functionally, part of the ABC transporter complex PstSACB involved in phosphate import. Responsible for energy coupling to the transport system. The sequence is that of Phosphate import ATP-binding protein PstB from Pseudomonas aeruginosa (strain ATCC 15692 / DSM 22644 / CIP 104116 / JCM 14847 / LMG 12228 / 1C / PRS 101 / PAO1).